Consider the following 122-residue polypeptide: Large ribosomal subunit protein uL29 (122 aa).

Residue Ser-12 is modified to Phosphoserine.

Belongs to the universal ribosomal protein uL29 family. In terms of assembly, component of the large ribosomal subunit (LSU). Mature yeast ribosomes consist of a small (40S) and a large (60S) subunit. The 40S small subunit contains 1 molecule of ribosomal RNA (18S rRNA) and at least 33 different proteins. The large 60S subunit contains 3 rRNA molecules (25S, 5.8S and 5S rRNA) and at least 46 different proteins. uL29 is associated with the polypeptide exit tunnel.

It is found in the cytoplasm. It localises to the nucleus. Its subcellular location is the nucleolus. In terms of biological role, component of the ribosome, a large ribonucleoprotein complex responsible for the synthesis of proteins in the cell. The small ribosomal subunit (SSU) binds messenger RNAs (mRNAs) and translates the encoded message by selecting cognate aminoacyl-transfer RNA (tRNA) molecules. The large subunit (LSU) contains the ribosomal catalytic site termed the peptidyl transferase center (PTC), which catalyzes the formation of peptide bonds, thereby polymerizing the amino acids delivered by tRNAs into a polypeptide chain. The nascent polypeptides leave the ribosome through a tunnel in the LSU and interact with protein factors that function in enzymatic processing, targeting, and the membrane insertion of nascent chains at the exit of the ribosomal tunnel. This Schizosaccharomyces pombe (strain 972 / ATCC 24843) (Fission yeast) protein is Large ribosomal subunit protein uL29 (rpl35).